Reading from the N-terminus, the 397-residue chain is Lysophospholipid transporter LplT (397 aa).

A run of 11 helical transmembrane segments spans residues 16-36 (MLAVICAQFLSAFGDNALLFA), 53-73 (VLQMLFVGAYILFAPFVGQFA), 91-111 (LGAGCICFGVNPFIGYTLVGI), 139-159 (LMESSTIAAILLGSMAGGILA), 164-184 (LAALIVCALVYGGAVVANLWI), 227-247 (LFWGAGVTLRFLLVIWVPVAL), 253-273 (AMPTYLNAMVAVGIVLGAGAA), 281-301 (TVSRCMPAGILIGIAVIAFAV), 305-325 (LLPAFGLLLLLGVFGGFFIVP), 352-372 (NVAMLLMLGLYSLAVSVGVPP), and 373-393 (VAVGIGFGAVFAVAIAALWVW).

This sequence belongs to the major facilitator superfamily. LplT (TC 2.A.1.42) family.

The protein localises to the cell inner membrane. In terms of biological role, catalyzes the facilitated diffusion of 2-acyl-glycero-3-phosphoethanolamine (2-acyl-GPE) into the cell. This Klebsiella pneumoniae subsp. pneumoniae (strain ATCC 700721 / MGH 78578) protein is Lysophospholipid transporter LplT.